Here is a 428-residue protein sequence, read N- to C-terminus: Enolase (428 aa).

Gln163 lines the (2R)-2-phosphoglycerate pocket. The active-site Proton donor is Glu205. Mg(2+) is bound by residues Asp242, Glu285, and Asp312. Residues Lys337, Arg366, Ser367, and Lys388 each contribute to the (2R)-2-phosphoglycerate site. Lys337 acts as the Proton acceptor in catalysis.

It belongs to the enolase family. Requires Mg(2+) as cofactor.

Its subcellular location is the cytoplasm. The protein resides in the secreted. The protein localises to the cell surface. The catalysed reaction is (2R)-2-phosphoglycerate = phosphoenolpyruvate + H2O. It functions in the pathway carbohydrate degradation; glycolysis; pyruvate from D-glyceraldehyde 3-phosphate: step 4/5. In terms of biological role, catalyzes the reversible conversion of 2-phosphoglycerate (2-PG) into phosphoenolpyruvate (PEP). It is essential for the degradation of carbohydrates via glycolysis. The polypeptide is Enolase (Moorella thermoacetica (strain ATCC 39073 / JCM 9320)).